Here is a 150-residue protein sequence, read N- to C-terminus: Lipoprotein signal peptidase (150 aa).

Helical transmembrane passes span 8-28, 58-78, and 81-101; these read FYAL…LAHA, GFSW…GWFL, and TTGS…NVFD. Active-site residues include aspartate 116 and aspartate 132. Residues 126-146 traverse the membrane as a helical segment; the sequence is VVFNIADLFILAGVFGTFLFL.

Belongs to the peptidase A8 family.

The protein localises to the cell membrane. The enzyme catalyses Release of signal peptides from bacterial membrane prolipoproteins. Hydrolyzes -Xaa-Yaa-Zaa-|-(S,diacylglyceryl)Cys-, in which Xaa is hydrophobic (preferably Leu), and Yaa (Ala or Ser) and Zaa (Gly or Ala) have small, neutral side chains.. It functions in the pathway protein modification; lipoprotein biosynthesis (signal peptide cleavage). Functionally, this protein specifically catalyzes the removal of signal peptides from prolipoproteins. This is Lipoprotein signal peptidase from Tropheryma whipplei (strain Twist) (Whipple's bacillus).